The sequence spans 173 residues: Urease accessory protein UreE (173 aa).

Residues 136–173 (PEGGAYAGSGQDHHDHSHGEHTQGEHTHDEAAEPHHHG) are disordered. Positions 146–173 (QDHHDHSHGEHTQGEHTHDEAAEPHHHG) are enriched in basic and acidic residues.

This sequence belongs to the UreE family.

The protein resides in the cytoplasm. In terms of biological role, involved in urease metallocenter assembly. Binds nickel. Probably functions as a nickel donor during metallocenter assembly. The polypeptide is Urease accessory protein UreE (Beijerinckia indica subsp. indica (strain ATCC 9039 / DSM 1715 / NCIMB 8712)).